The chain runs to 385 residues: Glucans biosynthesis protein C (385 aa).

A run of 10 helical transmembrane segments spans residues 17–37 (AWLM…SHTW), 60–80 (MQVF…RYPL), 91–111 (VGIP…IMLQ), 137–157 (ISHL…VWIF), 173–193 (KFSM…YAVI), 212–232 (FIVM…LAFI), 239–259 (LFTT…VAYL), 274–294 (TESV…FSFG), 311–331 (ASLF…AYIT), and 338–358 (WLGF…LYEI).

This sequence belongs to the acyltransferase 3 family. OpgC subfamily.

The protein resides in the cell membrane. It participates in glycan metabolism; osmoregulated periplasmic glucan (OPG) biosynthesis. Its function is as follows. Necessary for the succinyl substitution of periplasmic glucans. Could catalyze the transfer of succinyl residues from the cytoplasmic side of the membrane to the nascent glucan backbones on the periplasmic side of the membrane. The protein is Glucans biosynthesis protein C of Escherichia coli O45:K1 (strain S88 / ExPEC).